A 1195-amino-acid chain; its full sequence is Error-prone DNA polymerase (1195 aa).

The disordered stretch occupies residues 1163–1195 (ALNGDRRDTPDAPAQRHRHPRDVRILPPSRDFH).

The protein belongs to the DNA polymerase type-C family. DnaE2 subfamily.

Its subcellular location is the cytoplasm. The catalysed reaction is DNA(n) + a 2'-deoxyribonucleoside 5'-triphosphate = DNA(n+1) + diphosphate. In terms of biological role, DNA polymerase involved in damage-induced mutagenesis and translesion synthesis (TLS). It is not the major replicative DNA polymerase. The protein is Error-prone DNA polymerase of Rhodopseudomonas palustris (strain ATCC BAA-98 / CGA009).